The primary structure comprises 730 residues: Multifunctional procollagen lysine hydroxylase and glycosyltransferase (730 aa).

Positions 1–16 (MRVLPFLLPLIPVLLA) are cleaved as a signal peptide. The tract at residues 20–280 (TDLPELVVVT…CGLEVKESEE (261 aa)) is required for glycosyltransferase activity. UDP contacts are provided by residues 30 to 32 (VAT) and 98 to 100 (DAY). The Mn(2+) site is built by Asp98, Asp101, and His242. 245-248 (GPSK) contacts UDP. Cys268 and Cys271 are disulfide-bonded. The interval 281-507 (VPLIALNLFI…YYGFLIVSDE (227 aa)) is accessory region. Cys554 and Cys690 form a disulfide bridge. 2-oxoglutarate-binding residues include Arg590 and Tyr648. Residues 639–730 (ESNMMFVVRY…RYIMVSFINP (92 aa)) enclose the Fe2OG dioxygenase domain. His659 and Asp661 together coordinate Fe cation. Residues 664 to 707 (TFSIDIALNKKGRDYEGGGVRYIRYNCTVPADEVGYAMMFPGRL) are important for dimerization. N-linked (GlcNAc...) asparagine glycosylation occurs at Asn689. Residue His711 participates in Fe cation binding. Residue Arg721 coordinates 2-oxoglutarate.

In terms of assembly, homodimer. Fe(2+) is required as a cofactor. It depends on L-ascorbate as a cofactor. Requires Mn(2+) as cofactor.

The protein localises to the rough endoplasmic reticulum. Its subcellular location is the endoplasmic reticulum lumen. The protein resides in the endoplasmic reticulum membrane. It localises to the secreted. It is found in the extracellular space. The catalysed reaction is L-lysyl-[collagen] + 2-oxoglutarate + O2 = (5R)-5-hydroxy-L-lysyl-[collagen] + succinate + CO2. The enzyme catalyses (5R)-5-hydroxy-L-lysyl-[collagen] + UDP-alpha-D-galactose = (5R)-5-O-(beta-D-galactosyl)-5-hydroxy-L-lysyl-[collagen] + UDP + H(+). It catalyses the reaction (5R)-5-O-(beta-D-galactosyl)-5-hydroxy-L-lysyl-[collagen] + UDP-alpha-D-glucose = (5R)-5-O-[alpha-D-glucosyl-(1-&gt;2)-beta-D-galactosyl]-5-hydroxy-L-lysyl-[collagen] + UDP + H(+). Functionally, multifunctional enzyme that catalyzes a series of post-translational modifications on Lys residues in procollagen. Catalyzes the formation of hydroxylysine residues in -Xaa-Lys-Gly- sequences in type IV collagens. Transfers galactose onto hydroxylysine groups, giving rise to galactosyl 5-hydroxylysine. Catalyzes the subsequent transfer of glucose moieties, giving rise to 1,2-glucosylgalactosyl-5-hydroxylysine residues. Essential for normal biosynthesis and secretion of type IV collagens. Essential for normal stability of the basement membrane. In Caenorhabditis elegans, this protein is Multifunctional procollagen lysine hydroxylase and glycosyltransferase (let-268).